The chain runs to 64 residues: uncharacterized protein (64 aa).

The protein localises to the mitochondrion. This is an uncharacterized protein from Marchantia polymorpha (Common liverwort).